The chain runs to 1197 residues: uncharacterized protein (1197 aa).

This is an uncharacterized protein from Sinorhizobium fredii (strain NBRC 101917 / NGR234).